Reading from the N-terminus, the 184-residue chain is Protein GrpE (184 aa).

The interval 1–35 is disordered; the sequence is MTQENQNPPPEQEDVAADPQVNEAAASEPAAVKTP.

This sequence belongs to the GrpE family. As to quaternary structure, homodimer.

It is found in the cytoplasm. Functionally, participates actively in the response to hyperosmotic and heat shock by preventing the aggregation of stress-denatured proteins, in association with DnaK and GrpE. It is the nucleotide exchange factor for DnaK and may function as a thermosensor. Unfolded proteins bind initially to DnaJ; upon interaction with the DnaJ-bound protein, DnaK hydrolyzes its bound ATP, resulting in the formation of a stable complex. GrpE releases ADP from DnaK; ATP binding to DnaK triggers the release of the substrate protein, thus completing the reaction cycle. Several rounds of ATP-dependent interactions between DnaJ, DnaK and GrpE are required for fully efficient folding. In Polynucleobacter asymbioticus (strain DSM 18221 / CIP 109841 / QLW-P1DMWA-1) (Polynucleobacter necessarius subsp. asymbioticus), this protein is Protein GrpE.